Here is a 77-residue protein sequence, read N- to C-terminus: MPKKVFCGVVTKAKCDKTVKVSVLRVYKDKLYKKVIKRYKEYTVHDENNSCKEGDKVFIQEHRPISATKKWVIVRVE.

Belongs to the universal ribosomal protein uS17 family. In terms of assembly, part of the 30S ribosomal subunit.

In terms of biological role, one of the primary rRNA binding proteins, it binds specifically to the 5'-end of 16S ribosomal RNA. The chain is Small ribosomal subunit protein uS17 from Wolbachia sp. subsp. Brugia malayi (strain TRS).